The primary structure comprises 171 residues: Large ribosomal subunit protein bL9 (171 aa).

This sequence belongs to the bacterial ribosomal protein bL9 family.

Its function is as follows. Binds to the 23S rRNA. The polypeptide is Large ribosomal subunit protein bL9 (Rickettsia canadensis (strain McKiel)).